Here is a 231-residue protein sequence, read N- to C-terminus: Ribosyldihydronicotinamide dehydrogenase [quinone] (231 aa).

FAD is bound by residues H12 and 18-21 (FNGS). S80 carries the phosphoserine modification. 104 to 107 (LYWF) contributes to the FAD binding site. 127–129 (FDI) contacts substrate. FAD contacts are provided by residues 148–151 (TTGG) and Y156. H174 and H178 together coordinate Zn(2+). Residue E194 participates in FAD binding. S197 bears the Phosphoserine mark. R201 is an FAD binding site. C223 lines the Zn(2+) pocket.

The protein belongs to the NAD(P)H dehydrogenase (quinone) family. Homodimer. Zn(2+) is required as a cofactor. Requires FAD as cofactor.

Its subcellular location is the cytoplasm. The enzyme catalyses 1-(beta-D-ribofuranosyl)-1,4-dihydronicotinamide + a quinone + H(+) = beta-nicotinamide D-riboside + a quinol. In terms of biological role, the enzyme apparently serves as a quinone reductase in connection with conjugation reactions of hydroquinones involved in detoxification pathways as well as in biosynthetic processes such as the vitamin K-dependent gamma-carboxylation of glutamate residues in prothrombin synthesis. In Pongo abelii (Sumatran orangutan), this protein is Ribosyldihydronicotinamide dehydrogenase [quinone] (NQO2).